A 408-amino-acid chain; its full sequence is Protein SPATA31F3 (408 aa).

A helical transmembrane segment spans residues 11 to 31 (VGYPFYTYGSIIIIALIIWQV). A disordered region spans residues 51 to 71 (QKVKQRAKEKTPRARRHSRKE). The residue at position 152 (S152) is a Phosphoserine. Disordered stretches follow at residues 297 to 316 (TKTK…MKGA) and 351 to 408 (LPLS…SASS). Polar residues predominate over residues 351-392 (LPLSSGSSKRSPLLTCATQPENPSHVSVSTSAEGTCLPQEST).

The protein belongs to the SPATA31 family.

It localises to the membrane. This chain is Protein SPATA31F3 (SPATA31F3), found in Bos taurus (Bovine).